Consider the following 289-residue polypeptide: 33 kDa chaperonin (289 aa).

Intrachain disulfides connect Cys-230-Cys-232 and Cys-263-Cys-266.

It belongs to the HSP33 family. Under oxidizing conditions two disulfide bonds are formed involving the reactive cysteines. Under reducing conditions zinc is bound to the reactive cysteines and the protein is inactive.

Its subcellular location is the cytoplasm. In terms of biological role, redox regulated molecular chaperone. Protects both thermally unfolding and oxidatively damaged proteins from irreversible aggregation. Plays an important role in the bacterial defense system toward oxidative stress. This chain is 33 kDa chaperonin, found in Shigella flexneri serotype 5b (strain 8401).